The primary structure comprises 173 residues: Crossover junction endodeoxyribonuclease RuvC (173 aa).

Active-site residues include aspartate 8, glutamate 67, and aspartate 139. Mg(2+) contacts are provided by aspartate 8, glutamate 67, and aspartate 139.

This sequence belongs to the RuvC family. Homodimer which binds Holliday junction (HJ) DNA. The HJ becomes 2-fold symmetrical on binding to RuvC with unstacked arms; it has a different conformation from HJ DNA in complex with RuvA. In the full resolvosome a probable DNA-RuvA(4)-RuvB(12)-RuvC(2) complex forms which resolves the HJ. Mg(2+) serves as cofactor.

It is found in the cytoplasm. It catalyses the reaction Endonucleolytic cleavage at a junction such as a reciprocal single-stranded crossover between two homologous DNA duplexes (Holliday junction).. Its function is as follows. The RuvA-RuvB-RuvC complex processes Holliday junction (HJ) DNA during genetic recombination and DNA repair. Endonuclease that resolves HJ intermediates. Cleaves cruciform DNA by making single-stranded nicks across the HJ at symmetrical positions within the homologous arms, yielding a 5'-phosphate and a 3'-hydroxyl group; requires a central core of homology in the junction. The consensus cleavage sequence is 5'-(A/T)TT(C/G)-3'. Cleavage occurs on the 3'-side of the TT dinucleotide at the point of strand exchange. HJ branch migration catalyzed by RuvA-RuvB allows RuvC to scan DNA until it finds its consensus sequence, where it cleaves and resolves the cruciform DNA. The polypeptide is Crossover junction endodeoxyribonuclease RuvC (Pseudoalteromonas atlantica (strain T6c / ATCC BAA-1087)).